A 161-amino-acid chain; its full sequence is MLKDKKVIILGDRDGIPGQAIEACIKSAGAHVLFSTTECFVUTSAGAMDLENQKRIKGFAEEFGAENILIVLGGAEAEASGLACETVTNGDPTFAGPLAGVQLGLSCYHVVEPEIKNNVDADVYDEQIGMMEMVLDVDAIIAEIKGYREQFGKYVLAEAEV.

Selenocysteine 42 is an active-site residue. Residue selenocysteine 42 is a non-standard amino acid, selenocysteine.

Belongs to the GrdA family. In terms of assembly, monomer. Component of the glycine, sarcosine and betaine reductase complexes, together with components B and C.

The enzyme catalyses acetyl phosphate + [thioredoxin]-disulfide + NH4(+) + H2O = [thioredoxin]-dithiol + glycine + phosphate + H(+). The catalysed reaction is acetyl phosphate + methylamine + [thioredoxin]-disulfide + H2O = sarcosine + [thioredoxin]-dithiol + phosphate + H(+). It catalyses the reaction acetyl phosphate + trimethylamine + [thioredoxin]-disulfide + H2O = glycine betaine + [thioredoxin]-dithiol + phosphate + H(+). In the first step of glycine, betaine and sarcosine reductases, the substrate is bound to component PB via a Schiff base intermediate. Then the PB-activated substrate is nucleophilically attacked by the selenol anion of component PA to transform it to a carboxymethylated selenoether and the respective amine. By action of component PC, acetyl phosphate is formed, leaving component PA in its oxidized state. Finally component PA becomes reduced by the thioredoxin system to start a new catalytic cycle of reductive deamination. In Photobacterium profundum (strain SS9), this protein is Glycine/sarcosine/betaine reductase complex component A2 (grdA2).